An 818-amino-acid chain; its full sequence is Protein LDB19 (818 aa).

Positions 1–25 (MAFSRLTSTHQSNHNGYSNSNKKGQ) are disordered. Position 93 is a phosphothreonine (threonine 93). Over residues 352–361 (QVKIKESEKS) the composition is skewed to basic and acidic residues. The tract at residues 352 to 374 (QVKIKESEKSKKPRSHIKRYGEL) is disordered. The residue at position 384 (serine 384) is a Phosphoserine. The interval 388–436 (MPSQRLPGEPGREQAPNSSGPASTGNVGLDDENPVNEDEEDQPGSEFIH) is disordered. The segment covering 402 to 413 (APNSSGPASTGN) has biased composition (polar residues). Acidic residues predominate over residues 416-430 (LDDENPVNEDEEDQP). Lysine 486 participates in a covalent cross-link: Glycyl lysine isopeptide (Lys-Gly) (interchain with G-Cter in ubiquitin). Disordered stretches follow at residues 568 to 590 (QPIR…NVHN) and 607 to 644 (TPKV…NSNI). Threonine 619 carries the phosphothreonine modification. The span at 620–629 (PVNSNKSNHS) shows a compositional bias: polar residues. Serine 808 is subject to Phosphoserine.

This sequence belongs to the LDB19 family.

The protein resides in the cytoplasm. It localises to the golgi apparatus. Functionally, may be involved in protein-linked oligosaccharide phosphorylation since the deletion reduces the negative charge of the cell surface. Involved in the resistance to EDTA, cadmium chloride, cycloheximide, 6-dimethylaminopurine, methyl caffeate, beta-chloro-L-alanine, caffeine and cerulenin. The chain is Protein LDB19 (LDB19) from Saccharomyces cerevisiae (strain ATCC 204508 / S288c) (Baker's yeast).